We begin with the raw amino-acid sequence, 42 residues long: Phospholipase A1 (42 aa).

Belongs to the AB hydrolase superfamily. Lipase family. Post-translationally, contains six disulfide bonds. In terms of tissue distribution, expressed by the venom gland.

Its subcellular location is the secreted. It catalyses the reaction a 1,2-diacyl-sn-glycero-3-phosphocholine + H2O = a 2-acyl-sn-glycero-3-phosphocholine + a fatty acid + H(+). Catalyzes the hydrolysis of phosphatidylcholine with phospholipase A1 activity. May act as an allergen and induce hemolytic activity. The protein is Phospholipase A1 of Polistes gallicus (Paper wasp).